A 396-amino-acid polypeptide reads, in one-letter code: Elongation factor Tu (396 aa).

The tr-type G domain maps to 10 to 206 (KPHVNVGTIG…VLDTYIPEPE (197 aa)). The tract at residues 19–26 (GHVDHGKT) is G1. Residue 19–26 (GHVDHGKT) participates in GTP binding. Threonine 26 is a binding site for Mg(2+). Residues 60-64 (GITIN) are G2. Residues 81–84 (DCPG) form a G3 region. GTP-binding positions include 81-85 (DCPGH) and 136-139 (NKCD). Residues 136–139 (NKCD) are G4. Residues 174–176 (SAT) form a G5 region.

The protein belongs to the TRAFAC class translation factor GTPase superfamily. Classic translation factor GTPase family. EF-Tu/EF-1A subfamily. Monomer.

The protein localises to the cytoplasm. It carries out the reaction GTP + H2O = GDP + phosphate + H(+). Functionally, GTP hydrolase that promotes the GTP-dependent binding of aminoacyl-tRNA to the A-site of ribosomes during protein biosynthesis. The protein is Elongation factor Tu of Psychrobacter cryohalolentis (strain ATCC BAA-1226 / DSM 17306 / VKM B-2378 / K5).